Here is a 256-residue protein sequence, read N- to C-terminus: Capsid protein (256 aa).

The Bipartite nuclear localization signal signature appears at 3–20 (KRPADIVISTPASKVRRK). A Nuclear localization signal motif is present at residues 40-54 (RRRTWVNRPMYRKPM). A zinc finger lies at 68 to 85 (CEGPCKVQSYEQRHDVAH). The Nuclear export signal signature appears at 101-122 (ITHRTGKRFCIKSIYVLGKIWM). The Bipartite nuclear localization signal signature appears at 200 to 247 (NRFYKIYNHCTYNHQEAAKYENHTENALLLYMACTHASNPVYATLKIR).

It belongs to the geminiviridae capsid protein family. As to quaternary structure, homomultimer. Binds to single-stranded and double-stranded viral DNA. Interacts (via nuclear localization signals) with host importin alpha-1a.

It is found in the virion. It localises to the host nucleus. Functionally, encapsidates the viral genome into characteristic twinned ('geminate') particles. Binds the genomic viral ssDNA and shuttles it into and out of the cell nucleus. Plays a role in protection of the genome from degradation, virus acquisition and transmission by insect vectors, infectivity, and systemic movement. The CP of monopartite geminiviruses is absolutely essential for virus movement. The sequence is that of Capsid protein from Tomato leaf curl virus (strain Australia) (ToLCV).